Consider the following 289-residue polypeptide: Acetyl-coenzyme A carboxylase carboxyl transferase subunit beta (289 aa).

The region spanning 28–289 is the CoA carboxyltransferase N-terminal domain; that stretch reads VMTKCPECKK…QGGEMAVWQS (262 aa). The Zn(2+) site is built by Cys-32, Cys-35, Cys-51, and Cys-54. The segment at 32 to 54 adopts a C4-type zinc-finger fold; it reads CPECKKIMYTKELLKNLKVCVNC.

Belongs to the AccD/PCCB family. As to quaternary structure, acetyl-CoA carboxylase is a heterohexamer composed of biotin carboxyl carrier protein (AccB), biotin carboxylase (AccC) and two subunits each of ACCase subunit alpha (AccA) and ACCase subunit beta (AccD). The cofactor is Zn(2+).

Its subcellular location is the cytoplasm. It catalyses the reaction N(6)-carboxybiotinyl-L-lysyl-[protein] + acetyl-CoA = N(6)-biotinyl-L-lysyl-[protein] + malonyl-CoA. It functions in the pathway lipid metabolism; malonyl-CoA biosynthesis; malonyl-CoA from acetyl-CoA: step 1/1. In terms of biological role, component of the acetyl coenzyme A carboxylase (ACC) complex. Biotin carboxylase (BC) catalyzes the carboxylation of biotin on its carrier protein (BCCP) and then the CO(2) group is transferred by the transcarboxylase to acetyl-CoA to form malonyl-CoA. The chain is Acetyl-coenzyme A carboxylase carboxyl transferase subunit beta from Bacillus cereus (strain ATCC 14579 / DSM 31 / CCUG 7414 / JCM 2152 / NBRC 15305 / NCIMB 9373 / NCTC 2599 / NRRL B-3711).